Here is a 566-residue protein sequence, read N- to C-terminus: Proline--tRNA ligase (566 aa).

It belongs to the class-II aminoacyl-tRNA synthetase family. ProS type 1 subfamily. Homodimer.

The protein resides in the cytoplasm. It catalyses the reaction tRNA(Pro) + L-proline + ATP = L-prolyl-tRNA(Pro) + AMP + diphosphate. Its function is as follows. Catalyzes the attachment of proline to tRNA(Pro) in a two-step reaction: proline is first activated by ATP to form Pro-AMP and then transferred to the acceptor end of tRNA(Pro). As ProRS can inadvertently accommodate and process non-cognate amino acids such as alanine and cysteine, to avoid such errors it has two additional distinct editing activities against alanine. One activity is designated as 'pretransfer' editing and involves the tRNA(Pro)-independent hydrolysis of activated Ala-AMP. The other activity is designated 'posttransfer' editing and involves deacylation of mischarged Ala-tRNA(Pro). The misacylated Cys-tRNA(Pro) is not edited by ProRS. The polypeptide is Proline--tRNA ligase (Bacillus cereus (strain AH187)).